Consider the following 248-residue polypeptide: Acetylglutamate kinase (248 aa).

Residues 41–42 (GG), arginine 63, and asparagine 155 contribute to the substrate site.

This sequence belongs to the acetylglutamate kinase family. ArgB subfamily.

It is found in the cytoplasm. The enzyme catalyses N-acetyl-L-glutamate + ATP = N-acetyl-L-glutamyl 5-phosphate + ADP. Its pathway is amino-acid biosynthesis; L-arginine biosynthesis; N(2)-acetyl-L-ornithine from L-glutamate: step 2/4. In terms of biological role, catalyzes the ATP-dependent phosphorylation of N-acetyl-L-glutamate. This Lactiplantibacillus plantarum (strain ATCC BAA-793 / NCIMB 8826 / WCFS1) (Lactobacillus plantarum) protein is Acetylglutamate kinase.